Here is a 206-residue protein sequence, read N- to C-terminus: UPF0328 protein ECU01_0050/ECU01_1560 (206 aa).

Disordered stretches follow at residues 1–153 (MPRP…HSHT) and 179–206 (GRLH…LATL). A compositionally biased stretch (basic and acidic residues) spans 74–96 (HTEGCHTHEANPEPNTKHTETES). 2 stretches are compositionally biased toward polar residues: residues 97 to 120 (PKPQ…SQNT) and 132 to 148 (SRPS…QSPH).

It belongs to the UPF0328 family.

This is UPF0328 protein ECU01_0050/ECU01_1560 from Encephalitozoon cuniculi (strain GB-M1) (Microsporidian parasite).